Here is a 178-residue protein sequence, read N- to C-terminus: Ribosome maturation factor RimM (178 aa).

A PRC barrel domain is found at 98 to 178; it reads DGEYYWNQLE…RILVDWDPEF (81 aa).

The protein belongs to the RimM family. As to quaternary structure, binds ribosomal protein uS19.

The protein resides in the cytoplasm. An accessory protein needed during the final step in the assembly of 30S ribosomal subunit, possibly for assembly of the head region. Essential for efficient processing of 16S rRNA. May be needed both before and after RbfA during the maturation of 16S rRNA. It has affinity for free ribosomal 30S subunits but not for 70S ribosomes. The chain is Ribosome maturation factor RimM from Cellvibrio japonicus (strain Ueda107) (Pseudomonas fluorescens subsp. cellulosa).